We begin with the raw amino-acid sequence, 310 residues long: Ornithine carbamoyltransferase (310 aa).

Carbamoyl phosphate is bound by residues 56-59, Gln83, Arg107, and 134-137; these read STRT and HPCQ. L-ornithine-binding positions include Asn165, Asp229, and 233–234; that span reads SM. Residues 269-270 and Arg297 contribute to the carbamoyl phosphate site; that span reads CL.

Belongs to the aspartate/ornithine carbamoyltransferase superfamily. OTCase family.

Its subcellular location is the cytoplasm. It carries out the reaction carbamoyl phosphate + L-ornithine = L-citrulline + phosphate + H(+). It participates in amino-acid biosynthesis; L-arginine biosynthesis; L-arginine from L-ornithine and carbamoyl phosphate: step 1/3. In terms of biological role, reversibly catalyzes the transfer of the carbamoyl group from carbamoyl phosphate (CP) to the N(epsilon) atom of ornithine (ORN) to produce L-citrulline. The polypeptide is Ornithine carbamoyltransferase (Symbiobacterium thermophilum (strain DSM 24528 / JCM 14929 / IAM 14863 / T)).